The following is a 612-amino-acid chain: Probable cytosolic Fe-S cluster assembly factor SJAG_02895 (612 aa).

Position 13-20 (13-20) interacts with ATP; that stretch reads GKGGVGKS. [4Fe-4S] cluster-binding residues include C200 and C203. WD repeat units follow at residues 287–326, 330–370, 375–414, 420–459, 464–503, 528–566, and 574–612; these read GHRG…LIHV, YHTR…WECV, GHEN…EFDC, EHTQ…WVQT, SHTS…EDAA, TFTE…STWH, and AHDV…DQTA.

The protein in the N-terminal section; belongs to the Mrp/NBP35 ATP-binding proteins family. NUBP2/CFD1 subfamily. This sequence in the C-terminal section; belongs to the WD repeat CIA1 family. Heterotetramer of 2 nbp35 and 2 SJAG_02895 chains. It depends on [4Fe-4S] cluster as a cofactor.

It is found in the cytoplasm. It localises to the nucleus. Its function is as follows. Fusion protein of two essential components of the cytosolic iron-sulfur (Fe/S) protein assembly (CIA) machinery. Required for maturation of extramitochondrial Fe-S proteins. May form a heterotetramer with nubp35, functioning as a Fe-S scaffold complex, mediating the de novo assembly of an Fe-S cluster and its transfer to target apoproteins. This is Probable cytosolic Fe-S cluster assembly factor SJAG_02895 from Schizosaccharomyces japonicus (strain yFS275 / FY16936) (Fission yeast).